The following is a 484-amino-acid chain: MEVVIIRVGELTVKRGLTRAEMERLLLRAAREAAEECGGARFEKEPGRIYAYGDVNCLKKALSKVFGVKSVSPARVITYQKITDIALEAADLWSGIVAGKRFAVRVHRVGEHAFTSREVAAEVGAVLVAAGGRVDLEDPELEFYIEIRGNRAYFYTEVIEGPGGLPLGSEGKVLALVSAGIDSPVAAWMLMRRGAHVDVLYCNLGGTITLRHALEVIKRLLAWSYGYNARVIIADCGPVARAMRRGVREELWNIAFKRALYRIGVEIAKRLGAIALATGESLGQVSSQTLQALAAVEAGIDMPILRPLIGMDKDEIVKHAQKIGTYELSAKLPEYCAVFSRRPRKWALREEVEAIDLALYDAITEVVNNAKIVRKRELDEFIKALTPPHDIEIDSAPEGAVIVDLRDEESYKKWHLPGAVRAGVDDVLALVDKLGRDKTYVFYCYSGGLSLDVAESLRKLGIKAYSLRRTRNAVPPSSQGERGN.

The THUMP domain maps to Asn56 to Val158. ATP contacts are provided by residues Leu176–Val177, Lys257, Gly279, and Gln288. A disulfide bridge connects residues Cys336 and Cys444. The Rhodanese domain maps to Ala396–Gln479. Residue Cys444 is the Cysteine persulfide intermediate of the active site.

The protein belongs to the ThiI family.

Its subcellular location is the cytoplasm. The enzyme catalyses [ThiI sulfur-carrier protein]-S-sulfanyl-L-cysteine + a uridine in tRNA + 2 reduced [2Fe-2S]-[ferredoxin] + ATP + H(+) = [ThiI sulfur-carrier protein]-L-cysteine + a 4-thiouridine in tRNA + 2 oxidized [2Fe-2S]-[ferredoxin] + AMP + diphosphate. The catalysed reaction is [ThiS sulfur-carrier protein]-C-terminal Gly-Gly-AMP + S-sulfanyl-L-cysteinyl-[cysteine desulfurase] + AH2 = [ThiS sulfur-carrier protein]-C-terminal-Gly-aminoethanethioate + L-cysteinyl-[cysteine desulfurase] + A + AMP + 2 H(+). It participates in cofactor biosynthesis; thiamine diphosphate biosynthesis. In terms of biological role, catalyzes the ATP-dependent transfer of a sulfur to tRNA to produce 4-thiouridine in position 8 of tRNAs, which functions as a near-UV photosensor. Also catalyzes the transfer of sulfur to the sulfur carrier protein ThiS, forming ThiS-thiocarboxylate. This is a step in the synthesis of thiazole, in the thiamine biosynthesis pathway. The sulfur is donated as persulfide by IscS. The polypeptide is tRNA sulfurtransferase (Pyrobaculum aerophilum (strain ATCC 51768 / DSM 7523 / JCM 9630 / CIP 104966 / NBRC 100827 / IM2)).